A 1363-amino-acid chain; its full sequence is Spike glycoprotein (1363 aa).

Residues 1 to 13 (MFLILLISLPTAF) form the signal peptide. The Extracellular portion of the chain corresponds to 14–1307 (AVIGDLKCTT…GTYEYYVKWP (1294 aa)). A BetaCoV S1-NTD domain is found at 15–298 (VIGDLKCTTV…DFMSEIKCKT (284 aa)). Disulfide bonds link cysteine 21–cysteine 165, cysteine 160–cysteine 193, cysteine 172–cysteine 252, cysteine 286–cysteine 296, and cysteine 331–cysteine 356. N-linked (GlcNAc...) asparagine; by host glycosylation is found at asparagine 59 and asparagine 133. N-linked (GlcNAc...) asparagine; by host glycosylation is present at asparagine 198. The BetaCoV S1-CTD domain maps to 329 to 617 (PDCNIEAWLN…DVNSGTTCST (289 aa)). Asparagine 359 carries an N-linked (GlcNAc...) asparagine; by host glycan. Disulfide bonds link cysteine 374–cysteine 427 and cysteine 386–cysteine 615. Asparagine 437, asparagine 649, asparagine 676, asparagine 696, asparagine 714, asparagine 739, and asparagine 788 each carry an N-linked (GlcNAc...) asparagine; by host glycan. Fusion peptide regions lie at residues 914–935 (SAIE…VEAY) and 933–953 (EAYN…VQSY). Asparagine 937 is a glycosylation site (N-linked (GlcNAc...) asparagine; by host). A disulfide bridge connects residues cysteine 938 and cysteine 949. Residues 1014 to 1064 (QKLIANAFNNALGAIQEGFDATNSALVKIQAVVNANAETLNNLLQQLSNRF) form a heptad repeat 1 region. Positions 1043 to 1087 (QAVVNANAETLNNLLQQLSNRFGAISSSLQEILSRLDALEAQAQI) form a coiled coil. Asparagine 1194, asparagine 1224, asparagine 1234, asparagine 1253, asparagine 1267, and asparagine 1288 each carry an N-linked (GlcNAc...) asparagine; by host glycan. A heptad repeat 2 region spans residues 1258-1296 (APDLSLDYINVTFLDLQDEMNRLQEAIKVLNQSYINLKD). Residues 1269–1297 (TFLDLQDEMNRLQEAIKVLNQSYINLKDI) adopt a coiled-coil conformation. A helical transmembrane segment spans residues 1308–1328 (WYVWLLIGFAGVAMLVLLFFI). Residues 1329 to 1363 (CCCTGCGTSCFKKCGGCCDDYTGHQELVIKTSHED) lie on the Cytoplasmic side of the membrane. The KxHxx signature appears at 1359–1363 (TSHED).

It belongs to the betacoronaviruses spike protein family. In terms of assembly, homotrimer; each monomer consists of a S1 and a S2 subunit. The resulting peplomers protrude from the virus surface as spikes. Post-translationally, specific enzymatic cleavages in vivo yield mature proteins. The precursor is processed into S1 and S2 by host cell furin or another cellular protease to yield the mature S1 and S2 proteins. Additionally, a second cleavage leads to the release of a fusion peptide after viral attachment to host cell receptor. In terms of processing, the cytoplasmic Cys-rich domain is palmitoylated. Spike glycoprotein is digested within host endosomes.

It is found in the virion membrane. The protein localises to the host endoplasmic reticulum-Golgi intermediate compartment membrane. The protein resides in the host cell membrane. In terms of biological role, attaches the virion to the cell membrane by interacting with host receptor, initiating the infection. Functionally, mediates fusion of the virion and cellular membranes by acting as a class I viral fusion protein. Under the current model, the protein has at least three conformational states: pre-fusion native state, pre-hairpin intermediate state, and post-fusion hairpin state. During viral and target cell membrane fusion, the coiled coil regions (heptad repeats) assume a trimer-of-hairpins structure, positioning the fusion peptide in close proximity to the C-terminal region of the ectodomain. The formation of this structure appears to drive apposition and subsequent fusion of viral and target cell membranes. Acts as a viral fusion peptide which is unmasked following S2 cleavage occurring upon virus endocytosis. The chain is Spike glycoprotein from Bovine coronavirus (strain 98TXSF-110-LUN) (BCoV-LUN).